Consider the following 114-residue polypeptide: Iron-sulfur cluster insertion protein ErpA (114 aa).

Positions 42, 106, and 108 each coordinate iron-sulfur cluster.

This sequence belongs to the HesB/IscA family. Homodimer. The cofactor is iron-sulfur cluster.

Functionally, required for insertion of 4Fe-4S clusters for at least IspG. This Wigglesworthia glossinidia brevipalpis protein is Iron-sulfur cluster insertion protein ErpA.